The following is a 131-amino-acid chain: Transcription antitermination protein NusB (131 aa).

The protein belongs to the NusB family.

In terms of biological role, involved in transcription antitermination. Required for transcription of ribosomal RNA (rRNA) genes. Binds specifically to the boxA antiterminator sequence of the ribosomal RNA (rrn) operons. The protein is Transcription antitermination protein NusB of Bacillus subtilis (strain 168).